Reading from the N-terminus, the 464-residue chain is Chaperone SurA (464 aa).

Residues 1-25 form the signal peptide; sequence MTRYFSIVLSLLLAVSCVFLPVASA. PpiC domains are found at residues 175 to 277 and 292 to 391; these read GAQY…KLVE and ATEY…QRLG. The interval 439 to 464 is disordered; that stretch reads PADDHQTPSAAVIPATGAVLPSATKH.

The protein localises to the periplasm. The catalysed reaction is [protein]-peptidylproline (omega=180) = [protein]-peptidylproline (omega=0). Its function is as follows. Chaperone involved in the correct folding and assembly of outer membrane proteins. Recognizes specific patterns of aromatic residues and the orientation of their side chains, which are found more frequently in integral outer membrane proteins. May act in both early periplasmic and late outer membrane-associated steps of protein maturation. The sequence is that of Chaperone SurA from Xylella fastidiosa (strain 9a5c).